The chain runs to 229 residues: Large ribosomal subunit protein uL1 (229 aa).

This sequence belongs to the universal ribosomal protein uL1 family. Part of the 50S ribosomal subunit.

Functionally, binds directly to 23S rRNA. The L1 stalk is quite mobile in the ribosome, and is involved in E site tRNA release. In terms of biological role, protein L1 is also a translational repressor protein, it controls the translation of the L11 operon by binding to its mRNA. The sequence is that of Large ribosomal subunit protein uL1 from Clostridium botulinum (strain Loch Maree / Type A3).